Here is a 232-residue protein sequence, read N- to C-terminus: Sugar fermentation stimulation protein homolog (232 aa).

This sequence belongs to the SfsA family.

The chain is Sugar fermentation stimulation protein homolog from Moorella thermoacetica (strain ATCC 39073 / JCM 9320).